Here is a 456-residue protein sequence, read N- to C-terminus: Protein disulfide-isomerase TMX3 (456 aa).

The N-terminal stretch at 1–29 (MANAVGRRSWAALRLCAAVILLDLAVCKG) is a signal peptide. A Thioredoxin domain is found at 30-131 (FVEDLNESFK…KDDIIEFAHR (102 aa)). Residues 30-378 (FVEDLNESFK…TIVSIFKSSP (349 aa)) are Lumenal-facing. N-linked (GlcNAc...) asparagine glycosylation is present at asparagine 35. Residues cysteine 56 and cysteine 59 each act as nucleophile in the active site. A disulfide bridge connects residues cysteine 56 and cysteine 59. N-linked (GlcNAc...) asparagine glycosylation is found at asparagine 261 and asparagine 316. The helical transmembrane segment at 379-399 (LMGCFLFGLPLGVISIMCYGI) threads the bilayer. The Cytoplasmic portion of the chain corresponds to 400-456 (YTADTDGGYIEERYEVSKSEMENQEQIEESKEQESSSGGSLAPTVQEPKDVLEKKKD). Positions 416–456 (SKSEMENQEQIEESKEQESSSGGSLAPTVQEPKDVLEKKKD) are disordered. The segment covering 446-456 (EPKDVLEKKKD) has biased composition (basic and acidic residues). The Di-lysine motif signature appears at 453 to 456 (KKKD).

It belongs to the protein disulfide isomerase family.

It localises to the endoplasmic reticulum membrane. The catalysed reaction is Catalyzes the rearrangement of -S-S- bonds in proteins.. Probable disulfide isomerase, which participates in the folding of proteins containing disulfide bonds. May act as a dithiol oxidase. Acts as a regulator of endoplasmic reticulum-mitochondria contact sites via its ability to regulate redox signals. The chain is Protein disulfide-isomerase TMX3 (Tmx3) from Mus musculus (Mouse).